The chain runs to 145 residues: 3-hydroxyacyl-[acyl-carrier-protein] dehydratase FabZ (145 aa).

Residue H47 is part of the active site.

The protein belongs to the thioester dehydratase family. FabZ subfamily.

The protein localises to the cytoplasm. It catalyses the reaction a (3R)-hydroxyacyl-[ACP] = a (2E)-enoyl-[ACP] + H2O. Functionally, involved in unsaturated fatty acids biosynthesis. Catalyzes the dehydration of short chain beta-hydroxyacyl-ACPs and long chain saturated and unsaturated beta-hydroxyacyl-ACPs. The polypeptide is 3-hydroxyacyl-[acyl-carrier-protein] dehydratase FabZ (Ruthia magnifica subsp. Calyptogena magnifica).